A 474-amino-acid chain; its full sequence is Cell division protein FtsP (474 aa).

The tat-type signal signal peptide spans 1 to 27 (MSLSRRQFIQAAGLALGAGSLPLRAQA). One can recognise a Plastocyanin-like domain in the interval 229–288 (WVRLRLLNASNARRYTLQLSDGRPLYVVASDQGFLPAPVAVQQLSLAPGERREVVIDMSQ).

Belongs to the FtsP family. Post-translationally, predicted to be exported by the Tat system. The position of the signal peptide cleavage has not been experimentally proven.

It localises to the periplasm. In terms of biological role, cell division protein that is required for growth during stress conditions. May be involved in protecting or stabilizing the divisomal assembly under conditions of stress. The sequence is that of Cell division protein FtsP from Yersinia pestis.